The primary structure comprises 88 residues: Large ribosomal subunit protein bL27 (88 aa).

The segment at 1–22 (MAHKKGASSSRNGRDSNAQRLG) is disordered. The segment covering 7–19 (ASSSRNGRDSNAQ) has biased composition (polar residues).

Belongs to the bacterial ribosomal protein bL27 family.

This Mycolicibacterium gilvum (strain PYR-GCK) (Mycobacterium gilvum (strain PYR-GCK)) protein is Large ribosomal subunit protein bL27.